Reading from the N-terminus, the 282-residue chain is NADPH-dependent 7-cyano-7-deazaguanine reductase (282 aa).

Residue 88-90 (IES) participates in substrate binding. Residue 90–91 (SK) participates in NADPH binding. Catalysis depends on Cys190, which acts as the Thioimide intermediate. Catalysis depends on Asp197, which acts as the Proton donor. 229–230 (HE) provides a ligand contact to substrate. NADPH is bound at residue 258-259 (RG).

The protein belongs to the GTP cyclohydrolase I family. QueF type 2 subfamily. As to quaternary structure, homodimer.

The protein resides in the cytoplasm. It carries out the reaction 7-aminomethyl-7-carbaguanine + 2 NADP(+) = 7-cyano-7-deazaguanine + 2 NADPH + 3 H(+). It functions in the pathway tRNA modification; tRNA-queuosine biosynthesis. Its function is as follows. Catalyzes the NADPH-dependent reduction of 7-cyano-7-deazaguanine (preQ0) to 7-aminomethyl-7-deazaguanine (preQ1). The sequence is that of NADPH-dependent 7-cyano-7-deazaguanine reductase from Escherichia coli O127:H6 (strain E2348/69 / EPEC).